The sequence spans 326 residues: uncharacterized protein (326 aa).

Catalysis depends on Tyr-53, which acts as the Proton donor. 215–225 lines the NADP(+) pocket; sequence SPLAGGLLGGK. Positions 242–305 form a coiled coil; that stretch reads IEKHRLQLEK…AVEISLDKEI (64 aa).

This sequence belongs to the aldo/keto reductase family. Aldo/keto reductase 2 subfamily.

This is an uncharacterized protein from Bacillus subtilis (strain 168).